Reading from the N-terminus, the 512-residue chain is Cytochrome P450 monooxygenase TwmD (512 aa).

Residue Cys454 participates in heme binding.

Belongs to the cytochrome P450 family. Heme is required as a cofactor.

The protein operates within secondary metabolite biosynthesis. Cytochrome P450 monooxygenase; part of the gene cluster that mediates the biosynthesis of wortmanamides A and B, reduced long-chain polyketides amidated with a specific omega-amino acid, 5-aminopentanoic acid (5PA). The PKS modules of TwmB are involved in the synthesis of the polyketide backbone, whereas the non-canonical C domain of TwmB is a bonafide condensation domain that specifically selects 5PA and catalyzes amidation to release polyketide chain. The C domain clearly prefers C16 and C18 fatty acyl substrates, which is consistent with simultaneous formation of both octaketide and nonaketide acyl amides wortmanamides A and B. Because TwmB lacks a designated enoylreductase (ER) domain, the required activity is provided the enoyl reductase TwmE. The roles of the remaining enzymes have still to be clarified. The sequence is that of Cytochrome P450 monooxygenase TwmD from Talaromyces wortmannii (Penicillium wortmannii).